Consider the following 488-residue polypeptide: ATP synthase subunit beta (488 aa).

ATP is bound at residue 164–171; it reads GGAGVGKT.

This sequence belongs to the ATPase alpha/beta chains family. F-type ATPases have 2 components, CF(1) - the catalytic core - and CF(0) - the membrane proton channel. CF(1) has five subunits: alpha(3), beta(3), gamma(1), delta(1), epsilon(1). CF(0) has four main subunits: a(1), b(1), b'(1) and c(9-12).

It localises to the cellular thylakoid membrane. The catalysed reaction is ATP + H2O + 4 H(+)(in) = ADP + phosphate + 5 H(+)(out). Its function is as follows. Produces ATP from ADP in the presence of a proton gradient across the membrane. The catalytic sites are hosted primarily by the beta subunits. The polypeptide is ATP synthase subunit beta (Prochlorococcus marinus (strain SARG / CCMP1375 / SS120)).